Here is a 340-residue protein sequence, read N- to C-terminus: Uroporphyrinogen decarboxylase (340 aa).

Residues 23–27, D72, Y147, T202, and H316 each bind substrate; that span reads RQAGR.

It belongs to the uroporphyrinogen decarboxylase family. Homodimer.

The protein resides in the cytoplasm. The catalysed reaction is uroporphyrinogen III + 4 H(+) = coproporphyrinogen III + 4 CO2. It functions in the pathway porphyrin-containing compound metabolism; protoporphyrin-IX biosynthesis; coproporphyrinogen-III from 5-aminolevulinate: step 4/4. In terms of biological role, catalyzes the decarboxylation of four acetate groups of uroporphyrinogen-III to yield coproporphyrinogen-III. The sequence is that of Uroporphyrinogen decarboxylase from Pelobacter propionicus (strain DSM 2379 / NBRC 103807 / OttBd1).